The following is a 591-amino-acid chain: Polyphenol oxidase D, chloroplastic (591 aa).

The N-terminal 83 residues, 1–83 (MASLCSNSST…ANAIPLAASA (83 aa)), are a transit peptide targeting the chloroplast. Cystine bridges form between Cys-94-Cys-110 and Cys-109-Cys-177. Positions 176, 194, 203, 324, 328, and 366 each coordinate Cu cation. A cross-link (2'-(S-cysteinyl)-histidine (Cys-His)) is located at residues 180–194 (CNGAYRIGGKELQVH).

The protein belongs to the tyrosinase family. It depends on Cu(2+) as a cofactor.

The protein resides in the plastid. It localises to the chloroplast thylakoid lumen. It carries out the reaction 2 catechol + O2 = 2 1,2-benzoquinone + 2 H2O. In terms of biological role, catalyzes the oxidation of mono- and o-diphenols to o-diquinones. The polypeptide is Polyphenol oxidase D, chloroplastic (Solanum lycopersicum (Tomato)).